The chain runs to 626 residues: Aberrant root formation protein 4 (626 aa).

In terms of tissue distribution, widely expressed. Expressed throughout the root tip, stele and lateral primordia. Also expressed in the shoots.

Its subcellular location is the nucleus. Its function is as follows. Required for the initiation of lateral roots independent from auxin signaling. May function in maintaining the pericycle in the mitotically competent state needed for lateral root formation. The polypeptide is Aberrant root formation protein 4 (ALF4) (Arabidopsis thaliana (Mouse-ear cress)).